A 488-amino-acid chain; its full sequence is Bifunctional protein HldE (488 aa).

The tract at residues 1-327 (MDDTLAKLPR…GLAHGEHADP (327 aa)) is ribokinase. 201-204 (NRRE) serves as a coordination point for ATP. Asp272 is a catalytic residue. A cytidylyltransferase region spans residues 354–488 (FTNGCFDLLH…GRMNAPAVGG (135 aa)).

This sequence in the N-terminal section; belongs to the carbohydrate kinase PfkB family. It in the C-terminal section; belongs to the cytidylyltransferase family. In terms of assembly, homodimer.

It catalyses the reaction D-glycero-beta-D-manno-heptose 7-phosphate + ATP = D-glycero-beta-D-manno-heptose 1,7-bisphosphate + ADP + H(+). It carries out the reaction D-glycero-beta-D-manno-heptose 1-phosphate + ATP + H(+) = ADP-D-glycero-beta-D-manno-heptose + diphosphate. It participates in nucleotide-sugar biosynthesis; ADP-L-glycero-beta-D-manno-heptose biosynthesis; ADP-L-glycero-beta-D-manno-heptose from D-glycero-beta-D-manno-heptose 7-phosphate: step 1/4. It functions in the pathway nucleotide-sugar biosynthesis; ADP-L-glycero-beta-D-manno-heptose biosynthesis; ADP-L-glycero-beta-D-manno-heptose from D-glycero-beta-D-manno-heptose 7-phosphate: step 3/4. Functionally, catalyzes the phosphorylation of D-glycero-D-manno-heptose 7-phosphate at the C-1 position to selectively form D-glycero-beta-D-manno-heptose-1,7-bisphosphate. Catalyzes the ADP transfer from ATP to D-glycero-beta-D-manno-heptose 1-phosphate, yielding ADP-D-glycero-beta-D-manno-heptose. This Caulobacter sp. (strain K31) protein is Bifunctional protein HldE.